Reading from the N-terminus, the 137-residue chain is uncharacterized protein (137 aa).

The signal sequence occupies residues 1–19; the sequence is MVAFYGIFLFGTVYLFGLA.

This is an uncharacterized protein from Acanthamoeba polyphaga (Amoeba).